Consider the following 356-residue polypeptide: S-adenosylmethionine:tRNA ribosyltransferase-isomerase (356 aa).

It belongs to the QueA family. In terms of assembly, monomer.

It is found in the cytoplasm. The catalysed reaction is 7-aminomethyl-7-carbaguanosine(34) in tRNA + S-adenosyl-L-methionine = epoxyqueuosine(34) in tRNA + adenine + L-methionine + 2 H(+). The protein operates within tRNA modification; tRNA-queuosine biosynthesis. Functionally, transfers and isomerizes the ribose moiety from AdoMet to the 7-aminomethyl group of 7-deazaguanine (preQ1-tRNA) to give epoxyqueuosine (oQ-tRNA). The chain is S-adenosylmethionine:tRNA ribosyltransferase-isomerase from Escherichia coli (strain UTI89 / UPEC).